The primary structure comprises 240 residues: Aspartate/glutamate leucyltransferase (240 aa).

Belongs to the R-transferase family. Bpt subfamily.

Its subcellular location is the cytoplasm. It catalyses the reaction N-terminal L-glutamyl-[protein] + L-leucyl-tRNA(Leu) = N-terminal L-leucyl-L-glutamyl-[protein] + tRNA(Leu) + H(+). The enzyme catalyses N-terminal L-aspartyl-[protein] + L-leucyl-tRNA(Leu) = N-terminal L-leucyl-L-aspartyl-[protein] + tRNA(Leu) + H(+). Functions in the N-end rule pathway of protein degradation where it conjugates Leu from its aminoacyl-tRNA to the N-termini of proteins containing an N-terminal aspartate or glutamate. This chain is Aspartate/glutamate leucyltransferase, found in Thiobacillus denitrificans (strain ATCC 25259 / T1).